Here is a 445-residue protein sequence, read N- to C-terminus: Cyclic GMP-AMP phosphodiesterase SMPDL3A (445 aa).

The N-terminal stretch at 1 to 22 is a signal peptide; the sequence is MALLGNFLCCLLVAWLCGPGLG. Zn(2+)-binding residues include Asp42 and His44. Cys59 and Cys78 are joined by a disulfide. N-linked (GlcNAc...) asparagine glycosylation occurs at Asn66. Residue Asp107 participates in Zn(2+) binding. ATP is bound at residue His111. Asn128 is a glycosylation site (N-linked (GlcNAc...) asparagine). Asn148 provides a ligand contact to Zn(2+). Residues Asn148 and His149 each coordinate ATP. Residues Asn219 and Asn235 are each glycosylated (N-linked (GlcNAc...) asparagine). Residue His249 participates in Zn(2+) binding. Tyr257 contributes to the ATP binding site. Positions 290 and 292 each coordinate Zn(2+). N-linked (GlcNAc...) asparagine glycosylation is found at Asn353 and Asn364. 2 disulfides stabilise this stretch: Cys417–Cys421 and Cys427–Cys440.

Belongs to the acid sphingomyelinase family. As to quaternary structure, monomer. Homodimer; homodimerizes following 2',3'-cGAMP-binding. Zn(2+) is required as a cofactor. N-glycosylated. In terms of tissue distribution, detected in blood serum (at protein level).

It localises to the secreted. It catalyses the reaction 2',3'-cGAMP + H2O = 5'-pGpA(2'-5') + H(+). It carries out the reaction 5'-pGpA(2'-5') + H2O = 5'-GpA(2'-5') + phosphate. The catalysed reaction is a ribonucleoside 5'-triphosphate + H2O = a ribonucleoside 5'-diphosphate + phosphate + H(+). The enzyme catalyses ATP + H2O = ADP + phosphate + H(+). Requires micromolar levels of Zn(2+) for activity. Inhibited by millimolar levels of Zn(2+). In terms of biological role, cyclic-nucleotide phosphodiesterase that acts as a negative regulator of innate immunity by mediating degradation of 2',3'-cGAMP, thereby inhibiting the cGAS-STING signaling. Specifically linearizes 2',3'-cGAMP into 2'5'-bond pGpA and further hydrolyzes pGpA to produce GpA. Also has in vitro nucleotide phosphodiesterase activity with nucleoside triphosphates, such as ATP. Has in vitro activity with p-nitrophenyl-TMP. Has lower activity with nucleoside diphosphates, and no activity with nucleoside monophosphates. Has in vitro activity with CDP-choline, giving rise to CMP and phosphocholine. Has in vitro activity with CDP-ethanolamine. Does not have sphingomyelin phosphodiesterase activity. The sequence is that of Cyclic GMP-AMP phosphodiesterase SMPDL3A from Mus musculus (Mouse).